We begin with the raw amino-acid sequence, 120 residues long: Large ribosomal subunit protein bL36m (120 aa).

Belongs to the bacterial ribosomal protein bL36 family. In terms of assembly, component of the mitochondrial ribosome large subunit (39S) which comprises a 16S rRNA and about 50 distinct proteins.

It localises to the mitochondrion. This is Large ribosomal subunit protein bL36m (mrpl36) from Osmerus mordax (Rainbow smelt).